The primary structure comprises 1059 residues: Carbamoyl phosphate synthase large chain (1059 aa).

A carboxyphosphate synthetic domain region spans residues 1–401 (MPKRKDIQKI…SLLKACRSLE (401 aa)). The ATP site is built by arginine 129, arginine 169, glycine 175, glycine 176, arginine 208, isoleucine 210, glutamate 215, glycine 241, isoleucine 242, histidine 243, glutamine 284, and glutamate 298. Residues 133–327 (KQLMEELGQP…IAKLAAKIAV (195 aa)) enclose the ATP-grasp 1 domain. Residues glutamine 284, glutamate 298, and asparagine 300 each contribute to the Mg(2+) site. Glutamine 284, glutamate 298, and asparagine 300 together coordinate Mn(2+). The interval 402–546 (VCVDHNELPA…YSTYGFENES (145 aa)) is oligomerization domain. The tract at residues 547 to 929 (VKSSKESVLV…ALYKAFEASY (383 aa)) is carbamoyl phosphate synthetic domain. Positions 671–861 (EQALKELDIP…MAQVATRLIL (191 aa)) constitute an ATP-grasp 2 domain. ATP-binding residues include arginine 707, serine 746, isoleucine 748, glutamate 752, glycine 777, valine 778, histidine 779, serine 780, glutamine 820, and glutamate 832. 3 residues coordinate Mg(2+): glutamine 820, glutamate 832, and asparagine 834. The Mn(2+) site is built by glutamine 820, glutamate 832, and asparagine 834. The 130-residue stretch at 930–1059 (LHLPNFGNIV…ESRSFTTEAI (130 aa)) folds into the MGS-like domain. Residues 930-1059 (LHLPNFGNIV…ESRSFTTEAI (130 aa)) form an allosteric domain region.

It belongs to the CarB family. Composed of two chains; the small (or glutamine) chain promotes the hydrolysis of glutamine to ammonia, which is used by the large (or ammonia) chain to synthesize carbamoyl phosphate. Tetramer of heterodimers (alpha,beta)4. Mg(2+) is required as a cofactor. The cofactor is Mn(2+).

The catalysed reaction is hydrogencarbonate + L-glutamine + 2 ATP + H2O = carbamoyl phosphate + L-glutamate + 2 ADP + phosphate + 2 H(+). It carries out the reaction hydrogencarbonate + NH4(+) + 2 ATP = carbamoyl phosphate + 2 ADP + phosphate + 2 H(+). It functions in the pathway amino-acid biosynthesis; L-arginine biosynthesis; carbamoyl phosphate from bicarbonate: step 1/1. It participates in pyrimidine metabolism; UMP biosynthesis via de novo pathway; (S)-dihydroorotate from bicarbonate: step 1/3. In terms of biological role, large subunit of the glutamine-dependent carbamoyl phosphate synthetase (CPSase). CPSase catalyzes the formation of carbamoyl phosphate from the ammonia moiety of glutamine, carbonate, and phosphate donated by ATP, constituting the first step of 2 biosynthetic pathways, one leading to arginine and/or urea and the other to pyrimidine nucleotides. The large subunit (synthetase) binds the substrates ammonia (free or transferred from glutamine from the small subunit), hydrogencarbonate and ATP and carries out an ATP-coupled ligase reaction, activating hydrogencarbonate by forming carboxy phosphate which reacts with ammonia to form carbamoyl phosphate. This Streptococcus sanguinis (strain SK36) protein is Carbamoyl phosphate synthase large chain.